A 506-amino-acid polypeptide reads, in one-letter code: Galactose/methyl galactoside import ATP-binding protein MglA (506 aa).

ABC transporter domains follow at residues 14 to 249 and 264 to 506; these read LEMS…VGRS and VILE…SLHL. 46-53 is a binding site for ATP; that stretch reads GENGAGKS.

It belongs to the ABC transporter superfamily. Galactose/methyl galactoside importer (TC 3.A.1.2.3) family. In terms of assembly, the complex is composed of one ATP-binding protein (MglA), two transmembrane proteins (MglC) and a solute-binding protein (MglB).

It is found in the cell inner membrane. The enzyme catalyses D-galactose(out) + ATP + H2O = D-galactose(in) + ADP + phosphate + H(+). It carries out the reaction methyl beta-D-galactoside(out) + ATP + H2O = methyl beta-D-galactoside(in) + ADP + phosphate + H(+). In terms of biological role, part of the ABC transporter complex MglABC involved in galactose/methyl galactoside import. Responsible for energy coupling to the transport system. This Shigella boydii serotype 4 (strain Sb227) protein is Galactose/methyl galactoside import ATP-binding protein MglA.